We begin with the raw amino-acid sequence, 237 residues long: Urease accessory protein UreF (237 aa).

The protein belongs to the UreF family. In terms of assembly, ureD, UreF and UreG form a complex that acts as a GTP-hydrolysis-dependent molecular chaperone, activating the urease apoprotein by helping to assemble the nickel containing metallocenter of UreC. The UreE protein probably delivers the nickel.

It is found in the cytoplasm. In terms of biological role, required for maturation of urease via the functional incorporation of the urease nickel metallocenter. This is Urease accessory protein UreF from Streptococcus salivarius (strain 57.I).